Consider the following 131-residue polypeptide: MSWQTYVDEHLMCEIEGHHLASAAIFGHDGTVWAQSADFPQFKPEEITGIMKDLDEPGHLAPTGMFVAAAKYMVIQGEPGAVIRGKKGAGGITIKKTGQALVVGIYDEPMTPGQCNMVVERLGDYLVEQGM.

Cys13 and Cys115 form a disulfide bridge. The Involved in PIP2 interaction signature appears at 81 to 97; sequence AVIRGKKGAGGITIKKT. Position 111 is a phosphothreonine (Thr111).

It belongs to the profilin family. Occurs in many kinds of cells as a complex with monomeric actin in a 1:1 ratio. Phosphorylated by MAP kinases.

It is found in the cytoplasm. The protein localises to the cytoskeleton. Functionally, binds to actin and affects the structure of the cytoskeleton. At high concentrations, profilin prevents the polymerization of actin, whereas it enhances it at low concentrations. By binding to PIP2, it inhibits the formation of IP3 and DG. This chain is Profilin-3 (PRO3), found in Phleum pratense (Common timothy).